The chain runs to 666 residues: MKQYAIQPATLEFNAEGTPVSRDFDDVYFSNDNGLEETRYVFLGGNRLAERFPVHSHPLFIVAESGFGTGLNFLTLWQAFDSFRSAHPQATLQRLHFISFEKFPLTRDDLALAHQHWPELAPWAEQLQAQWPLPLPGCHRLLLDRGRVTLDLWFGDINELTDQLDATLNQTVDAWFLDGFAPAKNPDMWTPNLFNAMARLARPGATLATFTSAGFVRRGLQEAGFTMQKHKGFGRKREMLCGVMEQHLMPTLSAPWFYCSGSEKRETAIIGGGIASALLSLALLRRGWQVTLYCADDQPAQGASGNRQGALYPLLSKHDAAINRFFPTAFTFARRLYDALPVSFDHAWCGVTQLGWDEKSQQKIAQMLSLALPAGLASALNAEEAEQAVGVTTRCGGITYPAGGWLCPEQLTRAVIALATEQGLQTRFRHTLTSLVAQESRWQLRFTSGETASHETVVLANGHQINRFDQTRPLPVYAVGGQVSHIPTTPALSALRQVLCYDGYLTPQNPHNQQHCIGASYHRGDESTVWREEDQRQNRQRLLDCFPDANWATEVDVSGNSARCGVRCATRDHLPMVGNVPDYHATLTHYADLADNKTSAASAPVYPGLFMLGALGSRGLCSAPLCAEILAAQMSNEPIPLDAGTLAALNPNRLWVRKLLKGKAVK.

Residues 1 to 245 (MKQYAIQPAT…KREMLCGVME (245 aa)) form a tRNA (mnm(5)s(2)U34)-methyltransferase region. Residues 270–666 (IGGGIASALL…RKLLKGKAVK (397 aa)) are FAD-dependent cmnm(5)s(2)U34 oxidoreductase.

The protein in the N-terminal section; belongs to the methyltransferase superfamily. tRNA (mnm(5)s(2)U34)-methyltransferase family. It in the C-terminal section; belongs to the DAO family. FAD is required as a cofactor.

It localises to the cytoplasm. It carries out the reaction 5-aminomethyl-2-thiouridine(34) in tRNA + S-adenosyl-L-methionine = 5-methylaminomethyl-2-thiouridine(34) in tRNA + S-adenosyl-L-homocysteine + H(+). In terms of biological role, catalyzes the last two steps in the biosynthesis of 5-methylaminomethyl-2-thiouridine (mnm(5)s(2)U) at the wobble position (U34) in tRNA. Catalyzes the FAD-dependent demodification of cmnm(5)s(2)U34 to nm(5)s(2)U34, followed by the transfer of a methyl group from S-adenosyl-L-methionine to nm(5)s(2)U34, to form mnm(5)s(2)U34. The polypeptide is tRNA 5-methylaminomethyl-2-thiouridine biosynthesis bifunctional protein MnmC (Salmonella typhi).